The sequence spans 388 residues: Na(+)/H(+) antiporter NhaA (388 aa).

Transmembrane regions (helical) follow at residues 14 to 34 (GGII…MGAT), 59 to 79 (MLLW…GLEV), 95 to 115 (AFPV…YLAF), 125 to 145 (GWAI…ALLG), 154 to 174 (IFLM…IALF), 179 to 199 (LSIV…LLNL), 219 to 239 (VLKS…FIPL), 254 to 274 (VLHP…NAGV), 292 to 312 (IIAG…WLAL), 328 to 348 (IMAV…IASL), and 360 to 380 (WAKL…YSWL).

Belongs to the NhaA Na(+)/H(+) (TC 2.A.33) antiporter family.

Its subcellular location is the cell inner membrane. The catalysed reaction is Na(+)(in) + 2 H(+)(out) = Na(+)(out) + 2 H(+)(in). Na(+)/H(+) antiporter that extrudes sodium in exchange for external protons. This Salmonella choleraesuis (strain SC-B67) protein is Na(+)/H(+) antiporter NhaA.